Here is a 498-residue protein sequence, read N- to C-terminus: Dynein regulatory complex subunit 5 (498 aa).

2 disordered regions span residues 27–52 and 200–223; these read ALGSSSTGPTSLKTSSTPTPGQLKTK and MPTPLQGEEQSDSGSEGEGSEPEK. Residues 28–47 show a composition bias toward low complexity; it reads LGSSSTGPTSLKTSSTPTPG. LRR repeat units follow at residues 276–299, 306–327, 333–353, 361–382, 389–409, and 417–438; these read CHTLKIFKLTRSKVDDDKARILIR, ALEELDLSHNLIGDRGARAAAK, RLRVLNLANNQLQAPGAQSLA, NLVFLNLRLNCIEDEGGQAIAH, CLSVLHLGGNKLSEPTATLLS, and TLVSLNLSCNHIGQDGGKQLLE.

Belongs to the DRC5 family. As to quaternary structure, component of the nexin-dynein regulatory complex (N-DRC). Interacts with DRC1. Interacts with FBXL13/DRC6, DRC3 and DRC7. As to expression, testis-specific (at protein level).

It is found in the cell projection. The protein resides in the cilium. Its subcellular location is the flagellum. It localises to the cytoplasm. The protein localises to the cytoskeleton. It is found in the flagellum axoneme. In terms of biological role, component of the nexin-dynein regulatory complex (N-DRC) a key regulator of ciliary/flagellar motility which maintains the alignment and integrity of the distal axoneme and regulates microtubule sliding in motile axonemes. May play a role in the assembly of N-DRC. Required for sperm motility. This is Dynein regulatory complex subunit 5 (Tcte1) from Mus musculus (Mouse).